We begin with the raw amino-acid sequence, 206 residues long: Small ribosomal subunit protein uS4 (206 aa).

One can recognise an S4 RNA-binding domain in the interval Cys-96–Val-156.

This sequence belongs to the universal ribosomal protein uS4 family. Part of the 30S ribosomal subunit. Contacts protein S5. The interaction surface between S4 and S5 is involved in control of translational fidelity.

Functionally, one of the primary rRNA binding proteins, it binds directly to 16S rRNA where it nucleates assembly of the body of the 30S subunit. With S5 and S12 plays an important role in translational accuracy. This Pseudomonas fluorescens (strain Pf0-1) protein is Small ribosomal subunit protein uS4.